The chain runs to 83 residues: U2-hexatoxin-Hi1a (83 aa).

Positions Met1–Ala23 are cleaved as a signal peptide. Residues Asp24–Arg45 constitute a propeptide that is removed on maturation. 4 disulfides stabilise this stretch: Cys47–Cys63, Cys54–Cys68, Cys62–Cys78, and Cys70–Cys76.

This sequence belongs to the neurotoxin 07 (Beta/delta-agtx) family. In terms of tissue distribution, expressed by the venom gland.

The protein resides in the secreted. Inhibits sodium channels (Nav) of insects. The protein is U2-hexatoxin-Hi1a of Hadronyche infensa (Fraser island funnel-web spider).